Consider the following 344-residue polypeptide: 2-aminoethylphosphonate--pyruvate transaminase (344 aa).

K194 is subject to N6-(pyridoxal phosphate)lysine.

The protein belongs to the class-V pyridoxal-phosphate-dependent aminotransferase family. PhnW subfamily. In terms of assembly, homodimer. The cofactor is pyridoxal 5'-phosphate.

It carries out the reaction (2-aminoethyl)phosphonate + pyruvate = phosphonoacetaldehyde + L-alanine. Involved in phosphonate degradation. The chain is 2-aminoethylphosphonate--pyruvate transaminase from Bacillus cereus.